The sequence spans 155 residues: Small ribosomal subunit protein uS7 (155 aa).

This sequence belongs to the universal ribosomal protein uS7 family. In terms of assembly, part of the 30S ribosomal subunit. Contacts proteins S9 and S11.

In terms of biological role, one of the primary rRNA binding proteins, it binds directly to 16S rRNA where it nucleates assembly of the head domain of the 30S subunit. Is located at the subunit interface close to the decoding center, probably blocks exit of the E-site tRNA. The protein is Small ribosomal subunit protein uS7 of Mycoplasma capricolum subsp. capricolum (strain California kid / ATCC 27343 / NCTC 10154).